Here is a 421-residue protein sequence, read N- to C-terminus: Aspartokinase (421 aa).

7–10 is an ATP binding site; it reads KYGG. 25 to 30 is a binding site for substrate; it reads RIVATK. Serine 41 lines the ATP pocket. Substrate contacts are provided by residues 45–49, glutamate 74, 125–126, 151–154, and serine 154; these read DTTDE, LD, and RGGS. ATP contacts are provided by residues 174–175, 180–185, and lysine 210; these read SD and YTADPR. 2 consecutive ACT domains span residues 267-343 and 349-421; these read VTVL…YDDQ and LVGA…GTGR. Residues aspartate 274, 274-279, 292-294, glutamine 298, 360-361, 374-375, and 381-382 contribute to the substrate site; these read DKPGEA, NID, VT, NV, and SE.

This sequence belongs to the aspartokinase family. Tetramer consisting of 2 isoforms Alpha (catalytic and regulation) and of a homodimer of 2 isoforms Beta (regulation).

The catalysed reaction is L-aspartate + ATP = 4-phospho-L-aspartate + ADP. It participates in amino-acid biosynthesis; L-lysine biosynthesis via DAP pathway; (S)-tetrahydrodipicolinate from L-aspartate: step 1/4. The protein operates within amino-acid biosynthesis; L-methionine biosynthesis via de novo pathway; L-homoserine from L-aspartate: step 1/3. Its pathway is amino-acid biosynthesis; L-threonine biosynthesis; L-threonine from L-aspartate: step 1/5. Functionally, catalyzes the phosphorylation of the beta-carboxyl group of aspartic acid with ATP to yield 4-phospho-L-aspartate, which is involved in the branched biosynthetic pathway leading to the biosynthesis of amino acids lysine, threonine, isoleucine and methionine. In Corynebacterium efficiens (strain DSM 44549 / YS-314 / AJ 12310 / JCM 11189 / NBRC 100395), this protein is Aspartokinase (lysC).